We begin with the raw amino-acid sequence, 710 residues long: MNNSKLSVPGQYEDESSTIYVGNIDSRLSDEEIIKHFSKYGQVESIFRRLLDSFYPKEKAKPFKPPKNGVQYGFVKFVNAESIEEVLKDAKGMTLGQRKLTIKARVVNPAKLTDKKFKPNDTSITANVFNPSIQNNTDEENVKPGLKQSQIKEFIPNVEERNWETVRGINSRNPKPETTLTIPSLGLEDISMQVVPNAFASTLPLSILNLPAEVTPIDLYNHFKQAGVVKGTAVSQFLDQRGFRYGEVIMDSVESCQNAIEKLNNVPYKGSILEVSIKNKASSSVKSIPTTPTGESLWPFPSENANKTQINIENATCSKMTWIMGSPTKEKSQWGSVSTTGVSNQQNHPAAWNPDNKPQSIVHWDSLRESSPSIPNSPIDPSNLYVKNLDDTVITCKSQLEDLFSPFGSILSSMLACYPNSGISKGYGFVAFRQIEAAVRAKDTLNGMMVGKKRIFVCFAERKSDRIRRLQAFFANKPTSEQTAQQDNKALFVKPERSSTVTIRKPIESSTNKISENPTTLSSKVENKNEPKTGENKEPSQTNEYVNCKQENKELSGQLSGNLDIKKEAGKLSHDGEQGNLLKPLVFHANTKLNNRGSAKMGSTATNLKKIQDMLHNKKLSNAYFVPRARATTCTTLTYVTVEPSHFQDEDCNESTNMLSLVGYMDSYPEATSNIQKMNSYHIKDSNKENFLSTTKVNNNSPTTIQLTQI.

RRM domains follow at residues 19–102 (IYVG…KLTI) and 222–292 (HFKQ…PTTP). Residues 333–348 (QWGSVSTTGVSNQQNH) are compositionally biased toward polar residues. The segment at 333–357 (QWGSVSTTGVSNQQNHPAAWNPDNK) is disordered. The RRM 3 domain maps to 401 to 474 (EDLFSPFGSI…DRIRRLQAFF (74 aa)). Residues 502–524 (TIRKPIESSTNKISENPTTLSSK) show a composition bias toward polar residues. Positions 502–544 (TIRKPIESSTNKISENPTTLSSKVENKNEPKTGENKEPSQTNE) are disordered. Positions 525–538 (VENKNEPKTGENKE) are enriched in basic and acidic residues.

It localises to the cytoplasm. It is found in the nucleus. In terms of biological role, binds the poly(A) tail of mRNA. Involved in the export of mRNA from the nucleus to the cytoplasm. The polypeptide is mRNA export factor crp79 (crp79) (Schizosaccharomyces pombe (strain 972 / ATCC 24843) (Fission yeast)).